Reading from the N-terminus, the 388-residue chain is Succinate--CoA ligase [ADP-forming] subunit beta (388 aa).

Residues 9–244 (KQLFAEYGLP…PSQDDAREAH (236 aa)) form the ATP-grasp domain. ATP contacts are provided by residues K46, 53–55 (GRG), E99, T102, and E107. Residues N199 and D213 each coordinate Mg(2+). Substrate contacts are provided by residues N264 and 321–323 (GIV).

Belongs to the succinate/malate CoA ligase beta subunit family. Heterotetramer of two alpha and two beta subunits. Mg(2+) serves as cofactor.

It carries out the reaction succinate + ATP + CoA = succinyl-CoA + ADP + phosphate. The enzyme catalyses GTP + succinate + CoA = succinyl-CoA + GDP + phosphate. The protein operates within carbohydrate metabolism; tricarboxylic acid cycle; succinate from succinyl-CoA (ligase route): step 1/1. In terms of biological role, succinyl-CoA synthetase functions in the citric acid cycle (TCA), coupling the hydrolysis of succinyl-CoA to the synthesis of either ATP or GTP and thus represents the only step of substrate-level phosphorylation in the TCA. The beta subunit provides nucleotide specificity of the enzyme and binds the substrate succinate, while the binding sites for coenzyme A and phosphate are found in the alpha subunit. This chain is Succinate--CoA ligase [ADP-forming] subunit beta, found in Pseudomonas aeruginosa (strain LESB58).